The primary structure comprises 347 residues: UDP-3-O-acylglucosamine N-acyltransferase (347 aa).

The active-site Proton acceptor is the His248.

This sequence belongs to the transferase hexapeptide repeat family. LpxD subfamily. In terms of assembly, homotrimer.

The enzyme catalyses a UDP-3-O-[(3R)-3-hydroxyacyl]-alpha-D-glucosamine + a (3R)-hydroxyacyl-[ACP] = a UDP-2-N,3-O-bis[(3R)-3-hydroxyacyl]-alpha-D-glucosamine + holo-[ACP] + H(+). The protein operates within bacterial outer membrane biogenesis; LPS lipid A biosynthesis. Functionally, catalyzes the N-acylation of UDP-3-O-acylglucosamine using 3-hydroxyacyl-ACP as the acyl donor. Is involved in the biosynthesis of lipid A, a phosphorylated glycolipid that anchors the lipopolysaccharide to the outer membrane of the cell. This Parasynechococcus marenigrum (strain WH8102) protein is UDP-3-O-acylglucosamine N-acyltransferase.